A 275-amino-acid chain; its full sequence is Formamidopyrimidine-DNA glycosylase (275 aa).

Proline 2 serves as the catalytic Schiff-base intermediate with DNA. The Proton donor role is filled by glutamate 3. Lysine 58 serves as the catalytic Proton donor; for beta-elimination activity. DNA contacts are provided by histidine 91 and arginine 110. The segment at 238–272 (QVYGQTGKSCPRCGQAIVKLKVGGRGTHICPKCQK) adopts an FPG-type zinc-finger fold. Arginine 262 serves as the catalytic Proton donor; for delta-elimination activity.

It belongs to the FPG family. As to quaternary structure, monomer. Zn(2+) is required as a cofactor.

It carries out the reaction Hydrolysis of DNA containing ring-opened 7-methylguanine residues, releasing 2,6-diamino-4-hydroxy-5-(N-methyl)formamidopyrimidine.. The catalysed reaction is 2'-deoxyribonucleotide-(2'-deoxyribose 5'-phosphate)-2'-deoxyribonucleotide-DNA = a 3'-end 2'-deoxyribonucleotide-(2,3-dehydro-2,3-deoxyribose 5'-phosphate)-DNA + a 5'-end 5'-phospho-2'-deoxyribonucleoside-DNA + H(+). In terms of biological role, involved in base excision repair of DNA damaged by oxidation or by mutagenic agents. Acts as a DNA glycosylase that recognizes and removes damaged bases. Has a preference for oxidized purines, such as 7,8-dihydro-8-oxoguanine (8-oxoG). Has AP (apurinic/apyrimidinic) lyase activity and introduces nicks in the DNA strand. Cleaves the DNA backbone by beta-delta elimination to generate a single-strand break at the site of the removed base with both 3'- and 5'-phosphates. The protein is Formamidopyrimidine-DNA glycosylase of Streptococcus pyogenes serotype M3 (strain ATCC BAA-595 / MGAS315).